Consider the following 250-residue polypeptide: NADH-quinone oxidoreductase subunit C (250 aa).

The segment at 193–250 is disordered; the sequence is GMTPPLPGDEKADMPPIDDPMVTEGPEDTGAGARANAKAAEGTPADPPAMDDEEEDDA. Low complexity predominate over residues 222 to 236; it reads GAGARANAKAAEGTP. Residues 241-250 are compositionally biased toward acidic residues; that stretch reads AMDDEEEDDA.

The protein belongs to the complex I 30 kDa subunit family. In terms of assembly, NDH-1 is composed of 14 different subunits. Subunits NuoB, C, D, E, F, and G constitute the peripheral sector of the complex.

The protein localises to the cell inner membrane. It carries out the reaction a quinone + NADH + 5 H(+)(in) = a quinol + NAD(+) + 4 H(+)(out). NDH-1 shuttles electrons from NADH, via FMN and iron-sulfur (Fe-S) centers, to quinones in the respiratory chain. The immediate electron acceptor for the enzyme in this species is believed to be ubiquinone. Couples the redox reaction to proton translocation (for every two electrons transferred, four hydrogen ions are translocated across the cytoplasmic membrane), and thus conserves the redox energy in a proton gradient. This Erythrobacter litoralis (strain HTCC2594) protein is NADH-quinone oxidoreductase subunit C.